Consider the following 635-residue polypeptide: Threonine--tRNA ligase (635 aa).

The TGS domain maps to 1–61 (MIAITLPDGS…DRDVALAIIT (61 aa)). Positions 242 to 533 (DHRKLGKSLD…LLENHAGALP (292 aa)) are catalytic. Residues Cys333, His384, and His510 each contribute to the Zn(2+) site.

It belongs to the class-II aminoacyl-tRNA synthetase family. As to quaternary structure, homodimer. Zn(2+) is required as a cofactor.

The protein localises to the cytoplasm. It carries out the reaction tRNA(Thr) + L-threonine + ATP = L-threonyl-tRNA(Thr) + AMP + diphosphate + H(+). Its function is as follows. Catalyzes the attachment of threonine to tRNA(Thr) in a two-step reaction: L-threonine is first activated by ATP to form Thr-AMP and then transferred to the acceptor end of tRNA(Thr). Also edits incorrectly charged L-seryl-tRNA(Thr). The sequence is that of Threonine--tRNA ligase from Cupriavidus pinatubonensis (strain JMP 134 / LMG 1197) (Cupriavidus necator (strain JMP 134)).